Consider the following 750-residue polypeptide: Tegument protein UL46 homolog (750 aa).

4 disordered regions span residues 437-484, 525-593, 610-669, and 692-750; these read FCCP…SPRT, QRSD…DYMR, YTPY…EVVY, and SASR…VSSL. Residues 465 to 484 show a composition bias toward polar residues; the sequence is LRSSRQLPTSPPSNIVSPRT. Residues 528 to 540 are compositionally biased toward low complexity; the sequence is DSSSSDNSTCSST. The span at 541–553 shows a compositional bias: polar residues; sequence ETQYITLPSTPSP. Basic and acidic residues-rich tracts occupy residues 710-727 and 739-750; these read VCRE…DGFI and KHPDQTERVSSL.

It belongs to the herpesviridae HHV-1 VP11/12 protein family.

The protein resides in the virion tegument. It localises to the host cell membrane. Functionally, modulates alpha trans-inducing factor-dependent activation of alpha genes. The sequence is that of Tegument protein UL46 homolog from Equine herpesvirus 1 (strain V592) (EHV-1).